The following is a 95-amino-acid chain: uncharacterized protein (95 aa).

A disordered region spans residues 1-64; it reads MEIDDIFASK…PKGASGRKRT (64 aa). Residues 18-28 are compositionally biased toward basic and acidic residues; sequence KSNDSKSEAKA. The segment covering 35-49 has biased composition (polar residues); sequence TKSTPSRPKPTNNQD.

This is an uncharacterized protein from Schizosaccharomyces pombe (strain 972 / ATCC 24843) (Fission yeast).